Reading from the N-terminus, the 219-residue chain is Intraflagellar transport protein 22 (219 aa).

GTP is bound by residues 12-19 and 72-79; these read GPSKSGKS and WDVGGSSK.

This sequence belongs to the small GTPase superfamily. Rab family.

Its subcellular location is the cytoplasm. The protein resides in the cytoskeleton. The protein localises to the flagellum basal body. It is found in the cell projection. It localises to the cilium. Its subcellular location is the flagellum. In terms of biological role, required for flagellum formation. This is Intraflagellar transport protein 22 (IFT22) from Trypanosoma brucei brucei (strain 927/4 GUTat10.1).